Reading from the N-terminus, the 347-residue chain is NADH-ubiquinone oxidoreductase chain 2 (347 aa).

Helical transmembrane passes span 1–21 (MNPLIFSTILATIIMGTAIVM), 25–45 (HWLTIWIGFEMNMLAIIPMLM), 59–79 (YFLTQATASMLLMLAVIMNLT), 96–116 (IIMTIALTMKLGLSPFHFWVP), 127–147 (CLILLTWQKLAPLSILYMISP), 149–169 (INLNLLLSMSLISVAIGGWGG), 178–198 (IMAYSSIAHMGWMTAILAYNP), 200–220 (MTMLNLLVYITMTTTMFMLLI), 247–267 (IMLSLGGLPPLTGFLPKWMII), 276–296 (IIMPTLMAIMALLSLYFYMRL), and 325–345 (LLSPLIVMSTLTLPLAPMMSL).

The protein belongs to the complex I subunit 2 family. As to quaternary structure, core subunit of respiratory chain NADH dehydrogenase (Complex I) which is composed of 45 different subunits. Interacts with TMEM242.

The protein resides in the mitochondrion inner membrane. The catalysed reaction is a ubiquinone + NADH + 5 H(+)(in) = a ubiquinol + NAD(+) + 4 H(+)(out). In terms of biological role, core subunit of the mitochondrial membrane respiratory chain NADH dehydrogenase (Complex I) which catalyzes electron transfer from NADH through the respiratory chain, using ubiquinone as an electron acceptor. Essential for the catalytic activity and assembly of complex I. The sequence is that of NADH-ubiquinone oxidoreductase chain 2 from Natalus stramineus (Mexican funnel-eared bat).